The sequence spans 246 residues: UDP-N-acetyl-D-mannosaminuronic acid transferase (246 aa).

The protein belongs to the glycosyltransferase 26 family.

It catalyses the reaction UDP-N-acetyl-alpha-D-mannosaminouronate + N-acetyl-alpha-D-glucosaminyl-di-trans,octa-cis-undecaprenyl diphosphate = beta-D-ManNAcA-(1-&gt;4)-alpha-D-GlcNAc-di-trans,octa-cis-undecaprenyl diphosphate + UDP + H(+). It participates in bacterial outer membrane biogenesis; enterobacterial common antigen biosynthesis. Catalyzes the synthesis of Und-PP-GlcNAc-ManNAcA (Lipid II), the second lipid-linked intermediate involved in enterobacterial common antigen (ECA) synthesis. In Escherichia coli O157:H7, this protein is UDP-N-acetyl-D-mannosaminuronic acid transferase.